Here is an 882-residue protein sequence, read N- to C-terminus: Translation initiation factor IF-2 (882 aa).

Residues 28 to 294 (GIRKSADDSV…SSLQQGFQKP (267 aa)) form a disordered region. Positions 67–81 (STLNIPGTGGKSKSV) are enriched in polar residues. The segment covering 92 to 209 (VKRDPQEAER…RMAEENKWTD (118 aa)) has biased composition (basic and acidic residues). A compositionally biased stretch (basic residues) spans 244–258 (GRGRNAKAARPKKGN). Positions 259–272 (KHAESKADREEARA) are enriched in basic and acidic residues. Positions 381–550 (PRAPVVTIMG…LLQAEVLELK (170 aa)) constitute a tr-type G domain. The G1 stretch occupies residues 390-397 (GHVDHGKT). A GTP-binding site is contributed by 390–397 (GHVDHGKT). Residues 415-419 (GITQH) form a G2 region. Residues 436 to 439 (DTPG) form a G3 region. GTP is bound by residues 436–440 (DTPGH) and 490–493 (NKID). Residues 490–493 (NKID) are G4. Positions 526 to 528 (SAK) are G5. Lys800 carries the post-translational modification N6-acetyllysine.

The protein belongs to the TRAFAC class translation factor GTPase superfamily. Classic translation factor GTPase family. IF-2 subfamily.

The protein resides in the cytoplasm. Functionally, one of the essential components for the initiation of protein synthesis. Protects formylmethionyl-tRNA from spontaneous hydrolysis and promotes its binding to the 30S ribosomal subunits. Also involved in the hydrolysis of GTP during the formation of the 70S ribosomal complex. This Shigella flexneri serotype 5b (strain 8401) protein is Translation initiation factor IF-2.